Here is a 311-residue protein sequence, read N- to C-terminus: Olfactory receptor-like protein OLF1 (311 aa).

Topologically, residues 1–24 (MDGNYTLVTEFILLGFPTRPELQI) are extracellular. N-linked (GlcNAc...) asparagine glycosylation occurs at N4. The chain crosses the membrane as a helical span at residues 25–48 (VLFLVFLTLYGIILTGNIGLMMLI). Residues 49 to 56 (RTDPHLQT) lie on the Cytoplasmic side of the membrane. The chain crosses the membrane as a helical span at residues 57–78 (PMYFFLSNLSFADLCFSSAIVP). Residues 79–99 (KMLVNFLSENKSISLYGCALQ) are Extracellular-facing. A helical membrane pass occupies residues 100–119 (FYFSCAFADTESFILAAMAY). At 120-138 (DRYVAICNPLLYTVVMSRG) the chain is on the cytoplasmic side. Residues 139–157 (ICVWLIVLSYIGGNMSSLV) traverse the membrane as a helical segment. At 158–195 (HTSFAFILKYCDKNVINHFFCDLPPLLKLSCTDTSVNE) the chain is on the extracellular side. The chain crosses the membrane as a helical span at residues 196–218 (WLLSTYGSSVEIFCFIVIVISYY). At 219–235 (FILRSVLRIRSSSGRKK) the chain is on the cytoplasmic side. The helical transmembrane segment at 236 to 259 (TFSTCASHLTSVAIYQGTLLFIYS) threads the bilayer. At 260–271 (RPTYLYTPNTDK) the chain is on the extracellular side. The chain crosses the membrane as a helical span at residues 272 to 291 (IISVFYTIIIPVLNPLIYSL). Residues 292–311 (RNKDVKDAAKRAVRLKVDSS) lie on the Cytoplasmic side of the membrane.

It belongs to the G-protein coupled receptor 1 family.

It is found in the cell membrane. Functionally, putative odorant or sperm cell receptor. The sequence is that of Olfactory receptor-like protein OLF1 from Canis lupus familiaris (Dog).